The primary structure comprises 447 residues: uncharacterized protein (447 aa).

Disordered stretches follow at residues 1–80, 115–184, and 295–322; these read MTFE…EQSS, ATTQ…PNNP, and LQDNASLTSQGSNLSSQNSGLSSSSSGI. Over residues 11-32 the composition is skewed to basic and acidic residues; that stretch reads QRRDESAYRLGEEDGRQKGESS. The segment covering 42–51 has biased composition (polar residues); sequence KNPSNVSFWS. The segment covering 61-72 has biased composition (basic and acidic residues); the sequence is VKTDRPQFHRAD. Residues 115-158 show a composition bias toward polar residues; sequence ATTQSSPISTSFNPQLPSNSNTNRFDFGSESQLSSNYTNDTGLS. Low complexity predominate over residues 300 to 321; that stretch reads SLTSQGSNLSSQNSGLSSSSSG. 2 consecutive transmembrane segments (helical) span residues 385–405 and 424–444; these read FMFLFTFGIVFPPLWILASFL and IINRVVACLGVAITFLFIGLG.

The protein resides in the membrane. This is an uncharacterized protein from Schizosaccharomyces pombe (strain 972 / ATCC 24843) (Fission yeast).